Here is a 395-residue protein sequence, read N- to C-terminus: MAKKRVVVLYGGRADEHSISCISTAGVLGAMDTERFEPIPVGITKDGKWIINGEDPRGWNLDGGELPTVKITPESRPVMLDPSRGQDGFFIGEPSHINSADSGFGTSFVSMSDPEMHHVLTSLGHVDAVLPVLHGPYGEDGTVQGLLEMMGVPYVGCGVFASAACMDKHYTKVVLDAAGIPTAPGVTVDARNFTAADVLAEIEDAGLTYPLFVKPSRAGSSFGVTKVEKADDRETQQDRLAAAIATAGEHDWKVLVEQGIDGREIECAVLCPKAGDEPEASWPGEIVLDHQNDDQFYDFDSKYMDASASHVEVPANLPVSVLEDVRDVARRAFKAVDGVGLSRVDTFVTPDGTVMVNEINTMPGFTPISMYPKAWDATGVSYTELITRLIEGVLR.

The ATP-grasp domain maps to 172–391 (KVVLDAAGIP…YTELITRLIE (220 aa)). 204–266 (DAGLTYPLFV…EQGIDGREIE (63 aa)) contacts ATP. 3 residues coordinate Mg(2+): Asp345, Glu358, and Asn360.

This sequence belongs to the D-alanine--D-alanine ligase family. The cofactor is Mg(2+). Mn(2+) serves as cofactor.

The protein resides in the cytoplasm. It carries out the reaction 2 D-alanine + ATP = D-alanyl-D-alanine + ADP + phosphate + H(+). Its pathway is cell wall biogenesis; peptidoglycan biosynthesis. In terms of biological role, cell wall formation. This is D-alanine--D-alanine ligase from Bifidobacterium longum (strain DJO10A).